The following is a 241-amino-acid chain: Probable transcriptional regulatory protein LMOf2365_1554 (241 aa).

Residues 1-14 (MSGHSKWNNIQGRK) show a composition bias toward polar residues. Positions 1 to 22 (MSGHSKWNNIQGRKNAQDSKRS) are disordered.

Belongs to the TACO1 family.

It localises to the cytoplasm. This chain is Probable transcriptional regulatory protein LMOf2365_1554, found in Listeria monocytogenes serotype 4b (strain F2365).